Here is a 492-residue protein sequence, read N- to C-terminus: Catalase isozyme C (492 aa).

Arg-62 contributes to the heme binding site. His-65 is an active-site residue. Arg-102 is a binding site for heme. The active site involves Asn-138. Residue Phe-151 participates in heme binding. Tyr-210 carries the post-translational modification Phosphotyrosine; by STRK1. The segment at residues 325 to 348 is a cross-link (3-(S-cysteinyl)-tyrosine (Cys-Tyr)); that stretch reads CPGIIVPGIYYSDDKLLQTRIFSY. Arg-344, Tyr-348, and Arg-355 together coordinate heme. The Peroxisome targeting signal motif lies at 484 to 492; it reads SRLSAKPSM.

This sequence belongs to the catalase family. As to quaternary structure, homotetramer. Interacts with GLO1 and GLO4; these interactions are disturbed by alpha-hydroxy-2-pyridinemethanesulfonic acid (HPMS) and salicylic acid (SA). Interacts with STRK1 at the plasma membrane. The cofactor is heme. In terms of processing, activated by STRK1-mediated phosphorylation at Tyr-210 upon salt and oxidative stress. In terms of tissue distribution, highly expressed in mature leaves. Mainly expressed in leaf blades, stems, panicles, leaf sheaths, and culms, but barely in roots.

The protein localises to the peroxisome. The protein resides in the glyoxysome. It localises to the cell membrane. The catalysed reaction is 2 H2O2 = O2 + 2 H2O. With respect to regulation, strongly inhibited by beta-mercaptoethanol, sodium azide and potassium cyanide. Slightly repressed by 3-amino-1,2,4-triazole (3-AT). Activity is repressed proportionally to increased concentration of NaCl, KCl, LiCl and MgCl(2). In terms of biological role, occurs in almost all aerobically respiring organisms and serves to protect cells from the toxic effects of hydrogen peroxide. Responsible for the redox homeostasis in leaves. Prevents nitric oxide (NO) accumulation and subsequent NO-mediated leaf cell death as well as the S-nitrosylation of specific proteins (e.g. glyceraldehyde 3-phosphate dehydrogenase and thioredoxin) by degrading H(2)O(2). Involved in photorespiration. Promotes drought stress tolerance and recovery. Involved in NO-mediated enhanced tolerance to zinc oxide nanoparticles (ZnO NPs)-induced phytotoxicity. Participates in melatonin-mediated detoxification. The chain is Catalase isozyme C from Oryza sativa subsp. japonica (Rice).